We begin with the raw amino-acid sequence, 942 residues long: Lambda-carrageenase (942 aa).

Positions 1–25 (MKIKILSAMVASSLLIGCVIPTVKA) are cleaved as a signal peptide.

As to quaternary structure, monomer.

It is found in the secreted. The catalysed reaction is Endohydrolysis of (1-&gt;4)-beta-linkages in the backbone of lambda-carrageenan, resulting in the tetrasaccharide alpha-D-Galp2,6S2-(1-&gt;3)-beta-D-Galp2S-(1-&gt;4)-alpha-D-Galp2,6S2-(1-&gt;3)-D-Galp2S.. Functionally, hydrolyzes lambda-carrageenan with inversion of anomeric configuration. Does not hydrolyze iota- and kappa-carrageenans, agarose or porphyran. This is Lambda-carrageenase from Pseudoalteromonas carrageenovora (Alteromonas carrageenovora).